The chain runs to 460 residues: UDP-N-acetylmuramoylalanine--D-glutamate ligase (460 aa).

An ATP-binding site is contributed by 122–128 (GSNGKST).

Belongs to the MurCDEF family.

The protein localises to the cytoplasm. The enzyme catalyses UDP-N-acetyl-alpha-D-muramoyl-L-alanine + D-glutamate + ATP = UDP-N-acetyl-alpha-D-muramoyl-L-alanyl-D-glutamate + ADP + phosphate + H(+). Its pathway is cell wall biogenesis; peptidoglycan biosynthesis. Its function is as follows. Cell wall formation. Catalyzes the addition of glutamate to the nucleotide precursor UDP-N-acetylmuramoyl-L-alanine (UMA). This chain is UDP-N-acetylmuramoylalanine--D-glutamate ligase, found in Jannaschia sp. (strain CCS1).